Reading from the N-terminus, the 169-residue chain is E1B protein, small T-antigen (169 aa).

Positions 147-169 (GSVVEEEQGEEHLARDSDDPFFD) are disordered. The segment covering 156–169 (EEHLARDSDDPFFD) has biased composition (basic and acidic residues).

It belongs to the adenoviridae E1B 19 kDa protein family.

This Canine adenovirus serotype 1 (strain Glaxo) (CAdV-1) protein is E1B protein, small T-antigen.